The sequence spans 321 residues: Lipoyl synthase (321 aa).

Residues C68, C73, C79, C94, C98, C101, and S308 each contribute to the [4Fe-4S] cluster site. A Radical SAM core domain is found at 80–297; it reads FNHGTATFMI…KVIAEDLGFS (218 aa).

The protein belongs to the radical SAM superfamily. Lipoyl synthase family. Requires [4Fe-4S] cluster as cofactor.

Its subcellular location is the cytoplasm. The enzyme catalyses [[Fe-S] cluster scaffold protein carrying a second [4Fe-4S](2+) cluster] + N(6)-octanoyl-L-lysyl-[protein] + 2 oxidized [2Fe-2S]-[ferredoxin] + 2 S-adenosyl-L-methionine + 4 H(+) = [[Fe-S] cluster scaffold protein] + N(6)-[(R)-dihydrolipoyl]-L-lysyl-[protein] + 4 Fe(3+) + 2 hydrogen sulfide + 2 5'-deoxyadenosine + 2 L-methionine + 2 reduced [2Fe-2S]-[ferredoxin]. It participates in protein modification; protein lipoylation via endogenous pathway; protein N(6)-(lipoyl)lysine from octanoyl-[acyl-carrier-protein]: step 2/2. Functionally, catalyzes the radical-mediated insertion of two sulfur atoms into the C-6 and C-8 positions of the octanoyl moiety bound to the lipoyl domains of lipoate-dependent enzymes, thereby converting the octanoylated domains into lipoylated derivatives. This Shewanella amazonensis (strain ATCC BAA-1098 / SB2B) protein is Lipoyl synthase.